The following is a 180-amino-acid chain: MKGGKRVQTARPNRINGEIRAQEVRLTGLEGEQLGIVSLREALEKAEEAGVDLVEISPNAEPPVCRIMDYGKFLYEKSKSSKEQKKKQKVIQVKEIKFRPGTDEGDYQVKLRSLIRFLEEGDKAKITLRFRGREMAHQQIGMEVLNRVKDDLQELAVVESFPTKIEGRQMIMVLAPKKKQ.

It belongs to the IF-3 family. As to quaternary structure, monomer.

It is found in the cytoplasm. Functionally, IF-3 binds to the 30S ribosomal subunit and shifts the equilibrium between 70S ribosomes and their 50S and 30S subunits in favor of the free subunits, thus enhancing the availability of 30S subunits on which protein synthesis initiation begins. The sequence is that of Translation initiation factor IF-3 from Escherichia coli (strain K12 / MC4100 / BW2952).